The primary structure comprises 315 residues: uncharacterized protein (315 aa).

This is an uncharacterized protein from Caenorhabditis elegans.